Here is a 187-residue protein sequence, read N- to C-terminus: UPF0301 protein YPTS_3341 (187 aa).

This sequence belongs to the UPF0301 (AlgH) family.

The protein is UPF0301 protein YPTS_3341 of Yersinia pseudotuberculosis serotype IB (strain PB1/+).